The sequence spans 342 residues: S-adenosylmethionine:tRNA ribosyltransferase-isomerase (342 aa).

The protein belongs to the QueA family. In terms of assembly, monomer.

The protein resides in the cytoplasm. The enzyme catalyses 7-aminomethyl-7-carbaguanosine(34) in tRNA + S-adenosyl-L-methionine = epoxyqueuosine(34) in tRNA + adenine + L-methionine + 2 H(+). It participates in tRNA modification; tRNA-queuosine biosynthesis. Transfers and isomerizes the ribose moiety from AdoMet to the 7-aminomethyl group of 7-deazaguanine (preQ1-tRNA) to give epoxyqueuosine (oQ-tRNA). In Streptococcus pyogenes serotype M49 (strain NZ131), this protein is S-adenosylmethionine:tRNA ribosyltransferase-isomerase.